Consider the following 441-residue polypeptide: AP-2 complex subunit mu (441 aa).

The 267-residue stretch at R174–R440 folds into the MHD domain.

Belongs to the adapter complexes medium subunit family. As to quaternary structure, adapter protein complex 2 (AP-2) is a heterotetramer composed of two large adaptins (alpha-type subunit and beta-type subunits), a medium adaptin (mu-type subunit AP50) and a small adaptin (sigma-type subunit AP17). Brain, heart, lung, liver, testis and spleen.

It localises to the cell membrane. It is found in the membrane. The protein localises to the coated pit. Component of the adapter complexes which link clathrin to receptors in coated vesicles. Clathrin-associated protein complexes are believed to interact with the cytoplasmic tails of membrane proteins, leading to their selection and concentration. AP50 is a subunit of the plasma membrane adapter. Essential wnt/egl-20 signaling protein that functions in wnt/egl-20-producing cells. Required for the AP-2 complex-mediated endocytosis of membrane proteins including wntless homolog mig-14 in egl-20-producing cells. During development, regulates the migration of HSN neurons and the left and right Q neuroblasts (QL and QR, respectively) and their descendants, possibly through hox gene and wnt/egl-20 gene target mab-5, and plays a role in establishing ALM and PLM neuronal cell polarity. Regulates AWB sensory neuron cilia membrane expansion during development, potentially via localization of tub-1 and PtdIns(4,5)P2 to the ciliary base. Required for the asymmetric divisions of V5 cells. This chain is AP-2 complex subunit mu (dpy-23), found in Caenorhabditis elegans.